We begin with the raw amino-acid sequence, 212 residues long: Regulatory protein RecX (212 aa).

This sequence belongs to the RecX family.

It is found in the cytoplasm. Modulates RecA activity. The chain is Regulatory protein RecX from Clostridioides difficile (strain 630) (Peptoclostridium difficile).